Here is a 151-residue protein sequence, read N- to C-terminus: MKKIDVKILDSRIGNEFPLPTYATEGSAGLDLRALIDESFEIQPGETKLIPTGLSIYIADPNLAAVILPRSGLGHKHGIVLGNLVGLIDSDYQGPLMVSMWNRGNEPFKIEVGDRIAQLVFVPVVQAEFNIVEDFQQTERGEGGFGHSGKQ.

Substrate is bound by residues 70–72 (RSG), Asn83, 87–89 (LID), and Met97.

Belongs to the dUTPase family. Mg(2+) is required as a cofactor.

The catalysed reaction is dUTP + H2O = dUMP + diphosphate + H(+). Its pathway is pyrimidine metabolism; dUMP biosynthesis; dUMP from dCTP (dUTP route): step 2/2. This enzyme is involved in nucleotide metabolism: it produces dUMP, the immediate precursor of thymidine nucleotides and it decreases the intracellular concentration of dUTP so that uracil cannot be incorporated into DNA. The sequence is that of Deoxyuridine 5'-triphosphate nucleotidohydrolase from Haemophilus influenzae (strain 86-028NP).